We begin with the raw amino-acid sequence, 387 residues long: Phosphoglycerate kinase (387 aa).

Residues 21–23 (DLN), R36, 59–62 (HLGR), R113, and R146 contribute to the substrate site. ATP contacts are provided by residues K197, E314, and 340 to 343 (GGDT).

Belongs to the phosphoglycerate kinase family. In terms of assembly, monomer.

Its subcellular location is the cytoplasm. It catalyses the reaction (2R)-3-phosphoglycerate + ATP = (2R)-3-phospho-glyceroyl phosphate + ADP. It functions in the pathway carbohydrate degradation; glycolysis; pyruvate from D-glyceraldehyde 3-phosphate: step 2/5. This chain is Phosphoglycerate kinase, found in Pseudomonas fluorescens (strain ATCC BAA-477 / NRRL B-23932 / Pf-5).